A 316-amino-acid chain; its full sequence is Bifunctional peptidase and (3S)-lysyl hydroxylase JMJD7 (316 aa).

Cys-19 bears the Cysteine sulfenic acid (-SOH) mark. The 2-oxoglutarate site is built by Tyr-123 and Thr-172. Tyr-123 is a binding site for succinate. The region spanning 124–310 (IQKQNSNLSV…YCYYRMLEQM (187 aa)) is the JmjC domain. Residues His-175 and Asp-177 each contribute to the Fe cation site. 3 residues coordinate 2-oxoglutarate: Asn-181, Tyr-183, and Lys-190. Residues Tyr-183 and Lys-190 each contribute to the succinate site. His-278 serves as a coordination point for Fe cation. Residue Trp-292 coordinates 2-oxoglutarate.

Homodimer; disulfide-linked. The cofactor is Fe(2+). In terms of tissue distribution, expressed in the pars intercerebralis and fan-shaped body, regions known to be involved in sleep.

It is found in the nucleus. The protein resides in the cytoplasm. It carries out the reaction L-lysyl-[protein] + 2-oxoglutarate + O2 = (3S)-3-hydroxy-L-lysyl-[protein] + succinate + CO2. Bifunctional enzyme that acts both as an endopeptidase and 2-oxoglutarate-dependent monooxygenase. Endopeptidase that cleaves histones N-terminal tails at the carboxyl side of methylated arginine or lysine residues, to generate 'tailless nucleosomes', which may trigger transcription elongation. Hydroxylates the guanylate binding protein 128up. May be involved in regulation of behavior and circadian rhythms. The chain is Bifunctional peptidase and (3S)-lysyl hydroxylase JMJD7 from Drosophila melanogaster (Fruit fly).